Here is a 71-residue protein sequence, read N- to C-terminus: Large ribosomal subunit protein bL28 (71 aa).

Belongs to the bacterial ribosomal protein bL28 family.

The chain is Large ribosomal subunit protein bL28 from Rubrobacter xylanophilus (strain DSM 9941 / JCM 11954 / NBRC 16129 / PRD-1).